The sequence spans 168 residues: WAP four-disulfide core domain protein 2 (168 aa).

A signal peptide spans 1–30 (MPACRLCLLATGLLLGLLLFTPLSATGTRA). 2 WAP domains span residues 31 to 74 (EKPG…SKPN) and 119 to 167 (NGEK…TTPK). 4 cysteine pairs are disulfide-bonded: C36/C62, C45/C66, C49/C61, and C55/C70. The segment at 100–123 (PLSRGQVSTKPPVVTKEGGNGEKQ) is disordered. 4 cysteine pairs are disulfide-bonded: C126/C154, C137/C158, C141/C153, and C147/C163.

In terms of assembly, homotrimer; disulfide-linked.

The protein localises to the secreted. Its function is as follows. Broad range protease inhibitor. This chain is WAP four-disulfide core domain protein 2 (Wfdc2), found in Rattus norvegicus (Rat).